The following is a 403-amino-acid chain: Methylthioribose-1-phosphate isomerase (403 aa).

Residue Asp-280 is the Proton donor of the active site.

Belongs to the eIF-2B alpha/beta/delta subunits family. MtnA subfamily.

It localises to the cytoplasm. Its subcellular location is the nucleus. It carries out the reaction 5-(methylsulfanyl)-alpha-D-ribose 1-phosphate = 5-(methylsulfanyl)-D-ribulose 1-phosphate. It participates in amino-acid biosynthesis; L-methionine biosynthesis via salvage pathway; L-methionine from S-methyl-5-thio-alpha-D-ribose 1-phosphate: step 1/6. Functionally, catalyzes the interconversion of methylthioribose-1-phosphate (MTR-1-P) into methylthioribulose-1-phosphate (MTRu-1-P). The sequence is that of Methylthioribose-1-phosphate isomerase from Eremothecium gossypii (strain ATCC 10895 / CBS 109.51 / FGSC 9923 / NRRL Y-1056) (Yeast).